The following is a 142-amino-acid chain: uncharacterized protein (142 aa).

Residues 1–120 form the N-acetyltransferase domain; sequence MADKFDANDE…TILKWEKNMD (120 aa).

Belongs to the acetyltransferase family.

This is an uncharacterized protein from Streptococcus pyogenes serotype M1.